A 409-amino-acid chain; its full sequence is MHLQLNLCAILLSVLNGIQGAPKSINSKSCAISFPENVTAKKEPVYLKPSNDGSLSTPLQPSGPFVSLKIGESLAIFCPGDGKDVETITCNTNFDLASYSCNKSTSTDTIETEEVCGGSGKVYKVGFPLPSGNFHSIYQTCFDKKNLTPLYSIHILNGQAVGYHLKHTRGSFRTNGIYGKVNIDKLYKTQIEKFNKLFGPKQTFFRRPLNFLSRGHLSPEVDFTFRREQHATEMYINTAPQYQSINQGNWLRVENHVRDLAKVLQKDITVVTGILGILRLKSKKIEKEIYLGDDVIAVPAMFWKAVFDPQKQEAIVFVSSNNPHVKTFNPNCKDVCAQAGFGNDNLEYFSNYSIGLTICCKLEEFVKRNKIILPKEVNNKNYTKKLLKFPKTRNKEGDKKVVRKRAKGA.

A signal peptide spans M1 to G20. Residues N37 and N102 are each glycosylated (N-linked (GlcNAc...) asparagine). The active-site Proton acceptor is the H216. N246 contributes to the Mg(2+) binding site. Residues N351 and N381 are each glycosylated (N-linked (GlcNAc...) asparagine).

This sequence belongs to the DNA/RNA non-specific endonuclease family. It depends on Mg(2+) as a cofactor. In terms of tissue distribution, salivary gland.

It localises to the secreted. Its function is as follows. Hydrolyzes single-stranded and double-stranded DNA with little sequence specificity. Inhibits contact pathway of blood coagulation in the host by preventing activation of coagulation factor XII (F12) triggered by soluble DNA. Modestly up-regulates expression of CSF2, CXCL1 and CXCL8 in cultured human dermal microvascular endothelial cells. At higher doses promotes host neutrophil recruitment at the injection site in mouse model. (Microbial infection) Increases Leishmania major survival in the host by disrupting parasite-induced neutrophil extracellular traps. Exacerbates L.major parasite infectivity and increases cutaneous lesions in mouse model. The sequence is that of Salivary endonuclease from Lutzomyia longipalpis (Sand fly).